Consider the following 441-residue polypeptide: GVGFKAGVKDYRLTYYTPEYKTKDTDILAAFRMTPQPGVPAEERGAAVAAESSTGTWTTVQTDGLTSLDRYKGRCYDIEPVAGEENQYIAYVAYPLDLFEEGSVTNMLTSIVGNVFGFKALRALXXEDLRIPPAYSKTFIGPPHGIQVERDKLNKYGRPLLGCTIKPKLGLSAKNYGRAVYECLRGGLDFTKDDENVNSQPFMRWRDRFLFVAEALFKSQAETGEIKGHYLNATAGTCEEMMKRAVFARELGVPIVMHDYLTGGFTANTSLAFYCRDNGLLLHIHRAMHAVIDRPRNHGIHFRVLAKALRMSGGDHIHAGTVVGKLEGEREVTLGFVDLLRDDYIEKDRSRGIYFTQDWVSMPGVLPVASGGIHVWHMPALTEIFGDDSVLQFGGGTLGHPWGNAPGAVANRVALEACVQARNEGRDLAREGNEIIREASK.

At K5 the chain carries N6,N6,N6-trimethyllysine. N114 and T164 together coordinate substrate. K166 (proton acceptor) is an active-site residue. Residue K168 participates in substrate binding. Mg(2+) is bound by residues K192, D194, and E195. Position 192 is an N6-carboxylysine (K192). H285 functions as the Proton acceptor in the catalytic mechanism. Positions 286, 318, and 370 each coordinate substrate.

This sequence belongs to the RuBisCO large chain family. Type I subfamily. Heterohexadecamer of 8 large chains and 8 small chains; disulfide-linked. The disulfide link is formed within the large subunit homodimers. Mg(2+) is required as a cofactor. In terms of processing, the disulfide bond which can form in the large chain dimeric partners within the hexadecamer appears to be associated with oxidative stress and protein turnover.

The protein localises to the plastid. Its subcellular location is the chloroplast. It catalyses the reaction 2 (2R)-3-phosphoglycerate + 2 H(+) = D-ribulose 1,5-bisphosphate + CO2 + H2O. The catalysed reaction is D-ribulose 1,5-bisphosphate + O2 = 2-phosphoglycolate + (2R)-3-phosphoglycerate + 2 H(+). RuBisCO catalyzes two reactions: the carboxylation of D-ribulose 1,5-bisphosphate, the primary event in carbon dioxide fixation, as well as the oxidative fragmentation of the pentose substrate in the photorespiration process. Both reactions occur simultaneously and in competition at the same active site. The polypeptide is Ribulose bisphosphate carboxylase large chain (Argyrochosma delicatula (Delicate cloak fern)).